The chain runs to 500 residues: MSYFPWLTILVVLPIFAGSLIFFLPHKGNKIVRWYTIAICLLEFLIMTYAFCYHFQLEDPLIQLKEDSKWIDVFDFHWRLGIDGLSLGSILLTGFITTLATLAAWPVTRNSQLFYFLMLAMYSGQIGLFSSRDLLLFFIMWELELIPVYLLLSMWGGKRRLYSATKFILYTAGGSIFFLIGVLGMGLYGSNEPGLDLERLINQSYPTTLEILLYFGFLIAYAVKLPIIPLHTWLPDTHGEAHYSTCMLLAGILLKMGAYGLIRVNMELLPHAHYLFSPWLVIIGAVQIIYAASTSLGQRNFKKRIAYSSVSHMGFIIIGIGSITNIGLNGAILQILSHGFIGATLFFLAGTACDRMRLVYLEELGGISIPMPKIFTMFSSFSMASLALPGMSGFVAELVVFFGLITSPKFMLMPKMLITFVMAIGMILTPIYLLSMLRQMFYGYKLFHVPNKNFVDSGPRELFLLICIFLPVIGIGIYPDFVLSLSVDRVEVLLSNYYTK.

14 consecutive transmembrane segments (helical) span residues 4–24 (FPWL…IFFL), 35–55 (YTIA…CYHF), 87–107 (LGSI…AWPV), 111–131 (SQLF…LFSS), 134–154 (LLLF…LLSM), 167–187 (FILY…GMGL), 211–231 (ILLY…IPLH), 242–262 (HYST…YGLI), 272–292 (AHYL…IYAA), 313–333 (MGFI…GAIL), 334–354 (QILS…TACD), 386–406 (LALP…GLIT), 417–437 (LITF…LSML), and 462–482 (LFLL…PDFV).

The protein belongs to the complex I subunit 4 family.

It localises to the plastid. Its subcellular location is the chloroplast thylakoid membrane. The catalysed reaction is a plastoquinone + NADH + (n+1) H(+)(in) = a plastoquinol + NAD(+) + n H(+)(out). It carries out the reaction a plastoquinone + NADPH + (n+1) H(+)(in) = a plastoquinol + NADP(+) + n H(+)(out). In Saccharum officinarum (Sugarcane), this protein is NAD(P)H-quinone oxidoreductase chain 4, chloroplastic.